The sequence spans 108 residues: UPF0060 membrane protein YnfA (108 aa).

Over 1–5 (MFKTT) the chain is Periplasmic. The chain crosses the membrane as a helical span at residues 6–26 (LLFFITALCEIIGCFLPWLWL). Residues 27–30 (KRNG) lie on the Cytoplasmic side of the membrane. The chain crosses the membrane as a helical span at residues 31-51 (SIWLLLPAGVSLAFFVWLLTL). Over 52–60 (HPAASGRVY) the chain is Periplasmic. Residues 61–81 (AAYGGVYVCTALLWLRFIDGV) traverse the membrane as a helical segment. The Cytoplasmic segment spans residues 82–84 (KLS). Residues 85–105 (LYDWSGALIALCGMLIIVAGW) traverse the membrane as a helical segment. Residues 106-108 (GRA) lie on the Periplasmic side of the membrane.

It belongs to the UPF0060 family.

It localises to the cell inner membrane. The protein is UPF0060 membrane protein YnfA of Escherichia fergusonii (strain ATCC 35469 / DSM 13698 / CCUG 18766 / IAM 14443 / JCM 21226 / LMG 7866 / NBRC 102419 / NCTC 12128 / CDC 0568-73).